The chain runs to 100 residues: NADH-quinone oxidoreductase subunit K (100 aa).

The next 3 membrane-spanning stretches (helical) occupy residues 4–24, 28–48, and 60–80; these read LTHGLILAAILFVLGLTGLVI, LLFMLISLEIMINAAALAFVV, and IMYILAISLAAAEASIGLALL.

The protein belongs to the complex I subunit 4L family. As to quaternary structure, NDH-1 is composed of 13 different subunits. Subunits NuoA, H, J, K, L, M, N constitute the membrane sector of the complex.

The protein resides in the cell inner membrane. The enzyme catalyses a quinone + NADH + 5 H(+)(in) = a quinol + NAD(+) + 4 H(+)(out). In terms of biological role, NDH-1 shuttles electrons from NADH, via FMN and iron-sulfur (Fe-S) centers, to quinones in the respiratory chain. The immediate electron acceptor for the enzyme in this species is believed to be ubiquinone. Couples the redox reaction to proton translocation (for every two electrons transferred, four hydrogen ions are translocated across the cytoplasmic membrane), and thus conserves the redox energy in a proton gradient. The polypeptide is NADH-quinone oxidoreductase subunit K (Klebsiella pneumoniae (strain 342)).